The following is a 299-amino-acid chain: Phosphoribosylaminoimidazole-succinocarboxamide synthase (299 aa).

Belongs to the SAICAR synthetase family.

It catalyses the reaction 5-amino-1-(5-phospho-D-ribosyl)imidazole-4-carboxylate + L-aspartate + ATP = (2S)-2-[5-amino-1-(5-phospho-beta-D-ribosyl)imidazole-4-carboxamido]succinate + ADP + phosphate + 2 H(+). The protein operates within purine metabolism; IMP biosynthesis via de novo pathway; 5-amino-1-(5-phospho-D-ribosyl)imidazole-4-carboxamide from 5-amino-1-(5-phospho-D-ribosyl)imidazole-4-carboxylate: step 1/2. The polypeptide is Phosphoribosylaminoimidazole-succinocarboxamide synthase (Leifsonia xyli subsp. xyli (strain CTCB07)).